Consider the following 287-residue polypeptide: Membrane protein insertase YidC 2 (287 aa).

An N-terminal signal peptide occupies residues 1–26 (MKKKKRFKQKLLIASLVIGLMAVLSG). Cys27 carries N-palmitoyl cysteine lipidation. The S-diacylglycerol cysteine moiety is linked to residue Cys27. The next 5 membrane-spanning stretches (helical) occupy residues 65 to 85 (YAVG…PLMI), 135 to 155 (MMGC…YQAI), 178 to 198 (YILP…SMMG), 207 to 224 (AMIV…GITL), and 228 to 250 (LALY…NNPF).

It belongs to the OXA1/ALB3/YidC family. Type 2 subfamily.

Its subcellular location is the cell membrane. Required for the insertion and/or proper folding and/or complex formation of integral membrane proteins into the membrane. Involved in integration of membrane proteins that insert both dependently and independently of the Sec translocase complex, as well as at least some lipoproteins. This is Membrane protein insertase YidC 2 from Listeria monocytogenes serovar 1/2a (strain ATCC BAA-679 / EGD-e).